The following is an 853-amino-acid chain: Bromodomain-containing protein bet-1 (853 aa).

Over residues 1–19 the composition is skewed to polar residues; that stretch reads MSEGSGDQSQQRPWASPRQ. 2 disordered regions span residues 1-22 and 141-245; these read MSEG…QQPI and SLEQ…LRAK. A Bromo 1 domain is found at 39-145; it reads RHTNKLDYIM…EVIKKSLEQA (107 aa). Residues 141–153 show a composition bias toward basic and acidic residues; sequence SLEQAPREEHDMD. Low complexity-rich tracts occupy residues 166 to 175 and 192 to 215; these read SDGGSKSSSS and SEVS…SVAA. Residue Lys-252 forms a Glycyl lysine isopeptide (Lys-Gly) (interchain with G-Cter in SUMO) linkage. Positions 257-366 constitute a Bromo 2 domain; the sequence is QPLLPSMKPC…EVFDRRWAEL (110 aa). The span at 369-381 shows a compositional bias: low complexity; the sequence is SSSRASSVAPQSA. The disordered stretch occupies residues 369–418; that stretch reads SSSRASSVAPQSAPIAPTPKVAKSSAPKEPKESRKEHKKETTFEASGAKS. Basic and acidic residues predominate over residues 394–410; it reads APKEPKESRKEHKKETT. A coiled-coil region spans residues 419-458; it reads EDLMQINNALSMIREREEKLKAELAAAQAIKDKLTSVKNR. Residues 516–601 form the NET domain; sequence DSDDEDNKMA…TIPTLNGNGD (86 aa). Disordered regions lie at residues 594-814 and 819-838; these read PTLN…DEQT and MRME…VSLS. Positions 612 to 624 are enriched in low complexity; the sequence is TSSGATGSKGSSS. Residues 684-696 are compositionally biased toward polar residues; the sequence is QPPSTSREWNQSS. A compositionally biased stretch (low complexity) spans 708 to 736; the sequence is QPPMSRVPASSSTSVSAIGKNNAAASSNS. The span at 786 to 807 shows a compositional bias: polar residues; it reads QFFQSQPTTSATIRSPTESQPG. The span at 819 to 832 shows a compositional bias: basic and acidic residues; sequence MRMEAKRARQKEDE.

The protein belongs to the BET family. In terms of assembly, interacts with acetylated histone H4. Interacts (via BROMO domain 2) with smo-1 and ubc-9. As to expression, expressed in T-cells, Q-cells, V5-cells and their descendants such as somatic gonad and syncytium.

It is found in the nucleus. The protein resides in the chromosome. Its function is as follows. Required for the establishment and maintenance of stable cell fate in several lineages including V5.pa, T, Z1/Z4 and QR lineages probably by repressing the expression of cell fate determinants. Required to maintain non-distal tip cell (DTC) fate of somatic gonadal cells through the htz-1-mediated repression of transcription factor ceh-22. Regulates the subnuclear localization of histone variant htz-1 in somatic gonadal cells. Plays a role in the attenuation of the let-60/ras pathway, probably by preventing expression of activators of the pathway. Involved in adult locomotion. Acts together with the sumoylation pathway to prevent muscle myosin depletion in aging adults probably by preventing myoblast growth factor receptor egl-15 overexpression. May play a role in vulva development. This chain is Bromodomain-containing protein bet-1, found in Caenorhabditis elegans.